A 260-amino-acid polypeptide reads, in one-letter code: WUSCHEL-related homeobox 2 (260 aa).

Residues 10-74 (ASSSRWNPTK…NHKARQRQKQ (65 aa)) constitute a DNA-binding region (homeobox; WUS-type).

This sequence belongs to the WUS homeobox family.

It localises to the nucleus. In terms of biological role, probable transcription factor involved in embryonic patterning. Required for apical embryo development after fertilization. Its specific localization to the apical daughter cell of the zygote, while WOX8 is confined to the basal cell, suggests that the asymmetric division of the plant zygote separates determinants of apical and basal cell fates. The chain is WUSCHEL-related homeobox 2 (WOX2) from Arabidopsis thaliana (Mouse-ear cress).